The following is a 1424-amino-acid chain: Putative disease resistance protein At3g14460 (1424 aa).

The NB-ARC domain maps to 152–454 (WRQASRSRPD…AIDLLYQPRS (303 aa)). An ATP-binding site is contributed by 200–207 (GMPGVGKT). LRR repeat units follow at residues 498–523 (VSGD…HFSF), 552–571 (PTSL…LLNA), 572–595 (LSGL…LKGL), 597–618 (LLRY…VCTL), 620–641 (NLQT…SIAE), 642–665 (LINL…IKKL), and 806–830 (LPSL…FFFG). 2 disordered regions span residues 911–977 (FRRS…PKDR) and 1050–1070 (IKSS…QYDD). 2 stretches are compositionally biased toward polar residues: residues 912-927 (RRSL…SIPS) and 934-972 (SSPT…SLSS). 5 LRR repeats span residues 1090–1114 (PQNL…LTES), 1118–1139 (LHEL…HPPT), 1238–1262 (TPKL…LFGL), 1264–1286 (SLLS…GFPS), and 1310–1336 (LENL…LLPK).

The protein belongs to the disease resistance NB-LRR family.

Functionally, potential disease resistance protein. This is Putative disease resistance protein At3g14460 from Arabidopsis thaliana (Mouse-ear cress).